We begin with the raw amino-acid sequence, 273 residues long: Putative phosphoenolpyruvate synthase regulatory protein (273 aa).

Position 153-160 (153-160 (GVSRSGKT)) interacts with ADP.

This sequence belongs to the pyruvate, phosphate/water dikinase regulatory protein family. PSRP subfamily.

It catalyses the reaction [pyruvate, water dikinase] + ADP = [pyruvate, water dikinase]-phosphate + AMP + H(+). The catalysed reaction is [pyruvate, water dikinase]-phosphate + phosphate + H(+) = [pyruvate, water dikinase] + diphosphate. Functionally, bifunctional serine/threonine kinase and phosphorylase involved in the regulation of the phosphoenolpyruvate synthase (PEPS) by catalyzing its phosphorylation/dephosphorylation. The protein is Putative phosphoenolpyruvate synthase regulatory protein of Variovorax paradoxus (strain S110).